The primary structure comprises 462 residues: Keratin, type I cytoskeletal 28 (462 aa).

The segment at 1–26 (MSLRFSGGSRHVGIQSGSLRPPSGGA) is disordered. The tract at residues 1-83 (MSLRFSGGSR…GSEGGLLSGN (83 aa)) is head. Residues 84 to 119 (EKVTMQNLNNRLASYLDNVKALEEANSELERKIKTW) are coil 1A. In terms of domain architecture, IF rod spans 84-399 (EKVTMQNLNN…RLIDGDENSC (316 aa)). Residues 120–141 (HEKYGPGSCRGLDRDYSKYHLT) are linker 1. Residues 142–233 (IEDLKSKIIS…KNHEEEMKVL (92 aa)) form a coil 1B region. Residues 234 to 256 (QCAAGGNVNVEMNAAPGVDLTVL) are linker 12. The interval 257–395 (LNNMRAEYEA…ETYCRLIDGD (139 aa)) is coil 2. The tail stretch occupies residues 396–462 (ENSCSVSKGF…NGKAEQRVPF (67 aa)).

The protein belongs to the intermediate filament family. In terms of assembly, heterotetramer of two type I and two type II keratins. In the hair follicle and bulb, uniformly expressed in all three layers of the inner root sheath (the Henle layer, the Huxley layer and the cuticle) and observed in matrix cells (at protein level).

The protein localises to the cytoplasm. Essential for the proper assembly of types I and II keratin protein complexes and the formation of keratin intermediate filaments in the inner root sheath (irs). The chain is Keratin, type I cytoskeletal 28 from Mus musculus (Mouse).